Reading from the N-terminus, the 171-residue chain is Ribosome maturation factor RimM (171 aa).

In terms of domain architecture, PRC barrel spans 96–170 (PDSYYHFQLE…TMTVRLPDGL (75 aa)).

The protein belongs to the RimM family. As to quaternary structure, binds ribosomal protein uS19.

It localises to the cytoplasm. In terms of biological role, an accessory protein needed during the final step in the assembly of 30S ribosomal subunit, possibly for assembly of the head region. Essential for efficient processing of 16S rRNA. May be needed both before and after RbfA during the maturation of 16S rRNA. It has affinity for free ribosomal 30S subunits but not for 70S ribosomes. The protein is Ribosome maturation factor RimM of Heliobacterium modesticaldum (strain ATCC 51547 / Ice1).